A 417-amino-acid chain; its full sequence is NADH-quinone oxidoreductase subunit D (417 aa).

The protein belongs to the complex I 49 kDa subunit family. In terms of assembly, NDH-1 is composed of 14 different subunits. Subunits NuoB, C, D, E, F, and G constitute the peripheral sector of the complex.

It localises to the cell inner membrane. It carries out the reaction a quinone + NADH + 5 H(+)(in) = a quinol + NAD(+) + 4 H(+)(out). In terms of biological role, NDH-1 shuttles electrons from NADH, via FMN and iron-sulfur (Fe-S) centers, to quinones in the respiratory chain. The immediate electron acceptor for the enzyme in this species is believed to be ubiquinone. Couples the redox reaction to proton translocation (for every two electrons transferred, four hydrogen ions are translocated across the cytoplasmic membrane), and thus conserves the redox energy in a proton gradient. The chain is NADH-quinone oxidoreductase subunit D from Polynucleobacter necessarius subsp. necessarius (strain STIR1).